The sequence spans 151 residues: Deoxyuridine 5'-triphosphate nucleotidohydrolase (151 aa).

Substrate contacts are provided by residues 69-71 (RSG), asparagine 82, and 86-88 (TID).

Belongs to the dUTPase family. Mg(2+) is required as a cofactor.

The enzyme catalyses dUTP + H2O = dUMP + diphosphate + H(+). The protein operates within pyrimidine metabolism; dUMP biosynthesis; dUMP from dCTP (dUTP route): step 2/2. This enzyme is involved in nucleotide metabolism: it produces dUMP, the immediate precursor of thymidine nucleotides and it decreases the intracellular concentration of dUTP so that uracil cannot be incorporated into DNA. In Rhodospirillum centenum (strain ATCC 51521 / SW), this protein is Deoxyuridine 5'-triphosphate nucleotidohydrolase.